Reading from the N-terminus, the 2628-residue chain is Protein FMP27, mitochondrial (2628 aa).

Residues 1 to 28 form the signal peptide; that stretch reads MMFPINVLLYKWLIFAVTFLWSCKILLR. The segment at 29–192 is transmembrane domain; the sequence is KLLGINITWI…NTNLLIGEIM (164 aa). LRR repeat units follow at residues 160–182, 213–236, 271–296, 306–333, 571–596, 835–857, 1944–1967, 2101–2125, and 2303–2327; these read FDSFLRKLLWNGQTIIADAIFIV, PMNLLNLFINKENVDLMSNEKLLQ, IKPLKEMNVTVDKLQIKDFPLTNHPE, YNVLVSNINFNTNRFRNEMPGYTLIFEE, NADIDTLMLDLSELPTMVMLSELVHN, VVSLMSIFLAVSGIHTLNQIFGH, FDSLNLLKNTKKTLKQFEHRFFIF, FFMLKTLEFDANTTSNTYMQDIFLK, and IGKLDLSNIHNERMHQLLRLYILRK.

Its subcellular location is the cell membrane. It is found in the endoplasmic reticulum membrane. It localises to the mitochondrion membrane. Its function is as follows. Tube-forming lipid transport protein which binds to phosphatidylinositols and affects phosphatidylinositol-4,5-bisphosphate (PtdIns-4,5-P2) distribution. This chain is Protein FMP27, mitochondrial, found in Saccharomyces cerevisiae (strain ATCC 204508 / S288c) (Baker's yeast).